We begin with the raw amino-acid sequence, 329 residues long: Beta-ketoacyl-[acyl-carrier-protein] synthase III (329 aa).

Catalysis depends on residues Cys-113 and His-255. Residues Gln-256–Arg-260 form an ACP-binding region. Residue Asn-285 is part of the active site.

This sequence belongs to the thiolase-like superfamily. FabH family. As to quaternary structure, homodimer.

It is found in the cytoplasm. It catalyses the reaction malonyl-[ACP] + acetyl-CoA + H(+) = 3-oxobutanoyl-[ACP] + CO2 + CoA. Its pathway is lipid metabolism; fatty acid biosynthesis. Catalyzes the condensation reaction of fatty acid synthesis by the addition to an acyl acceptor of two carbons from malonyl-ACP. Catalyzes the first condensation reaction which initiates fatty acid synthesis and may therefore play a role in governing the total rate of fatty acid production. Possesses both acetoacetyl-ACP synthase and acetyl transacylase activities. Its substrate specificity determines the biosynthesis of branched-chain and/or straight-chain of fatty acids. The polypeptide is Beta-ketoacyl-[acyl-carrier-protein] synthase III (Chlorobium chlorochromatii (strain CaD3)).